Consider the following 452-residue polypeptide: Glutamyl-tRNA(Gln) amidotransferase subunit A (452 aa).

Catalysis depends on charge relay system residues lysine 56 and serine 131. The active-site Acyl-ester intermediate is the serine 155.

Belongs to the amidase family. GatA subfamily. As to quaternary structure, heterotrimer of A, B and C subunits.

The catalysed reaction is L-glutamyl-tRNA(Gln) + L-glutamine + ATP + H2O = L-glutaminyl-tRNA(Gln) + L-glutamate + ADP + phosphate + H(+). Allows the formation of correctly charged Gln-tRNA(Gln) through the transamidation of misacylated Glu-tRNA(Gln) in organisms which lack glutaminyl-tRNA synthetase. The reaction takes place in the presence of glutamine and ATP through an activated gamma-phospho-Glu-tRNA(Gln). The sequence is that of Glutamyl-tRNA(Gln) amidotransferase subunit A from Campylobacter concisus (strain 13826).